Consider the following 147-residue polypeptide: Large ribosomal subunit protein uL16 (147 aa).

The protein belongs to the universal ribosomal protein uL16 family. Part of the 50S ribosomal subunit.

In terms of biological role, binds 23S rRNA and is also seen to make contacts with the A and possibly P site tRNAs. In Caldicellulosiruptor bescii (strain ATCC BAA-1888 / DSM 6725 / KCTC 15123 / Z-1320) (Anaerocellum thermophilum), this protein is Large ribosomal subunit protein uL16.